The primary structure comprises 121 residues: Large ribosomal subunit protein uL22 (121 aa).

Belongs to the universal ribosomal protein uL22 family. As to quaternary structure, part of the 50S ribosomal subunit.

Its function is as follows. This protein binds specifically to 23S rRNA; its binding is stimulated by other ribosomal proteins, e.g. L4, L17, and L20. It is important during the early stages of 50S assembly. It makes multiple contacts with different domains of the 23S rRNA in the assembled 50S subunit and ribosome. The globular domain of the protein is located near the polypeptide exit tunnel on the outside of the subunit, while an extended beta-hairpin is found that lines the wall of the exit tunnel in the center of the 70S ribosome. The protein is Large ribosomal subunit protein uL22 of Paenarthrobacter aurescens (strain TC1).